Reading from the N-terminus, the 113-residue chain is Hydrogenase maturation factor HypA (113 aa).

His2 contributes to the Ni(2+) binding site. 4 residues coordinate Zn(2+): Cys73, Cys76, Cys89, and Cys92.

It belongs to the HypA/HybF family.

Its function is as follows. Involved in the maturation of [NiFe] hydrogenases. Required for nickel insertion into the metal center of the hydrogenase. The polypeptide is Hydrogenase maturation factor HypA (Rhizobium leguminosarum bv. viciae).